A 189-amino-acid chain; its full sequence is MFWLLAIFAYLLGSLSFAILLSRLTGNPDPRMSGSGNAGATNMLRLAGKKLAVLTLLGDLCKGLAPVLIAHLAGLSLQQQAWVGLYAVLGHLFPLYFRFRGGKGVATAAGMLLGLYPPAALLAIAAWALTFYLTRTSSLAALIATPLTLPLLAWQEPEALLPMSVLTLLIVWRHRGNLRDLFAGRERHF.

The next 5 membrane-spanning stretches (helical) occupy residues 1-21 (MFWL…AILL), 51-71 (LAVL…LIAH), 77-97 (LQQQ…PLYF), 111-131 (MLLG…ALTF), and 151-171 (LLAW…LLIV).

It belongs to the PlsY family. In terms of assembly, probably interacts with PlsX.

The protein resides in the cell inner membrane. It catalyses the reaction an acyl phosphate + sn-glycerol 3-phosphate = a 1-acyl-sn-glycero-3-phosphate + phosphate. It functions in the pathway lipid metabolism; phospholipid metabolism. Functionally, catalyzes the transfer of an acyl group from acyl-phosphate (acyl-PO(4)) to glycerol-3-phosphate (G3P) to form lysophosphatidic acid (LPA). This enzyme utilizes acyl-phosphate as fatty acyl donor, but not acyl-CoA or acyl-ACP. The polypeptide is Glycerol-3-phosphate acyltransferase (Pseudomonas fluorescens (strain ATCC BAA-477 / NRRL B-23932 / Pf-5)).